The primary structure comprises 289 residues: NAC domain-containing protein 2 (289 aa).

One can recognise an NAC domain in the interval Leu7–Lys158.

In terms of assembly, interacts with KIN10 and KIN11.

The protein resides in the nucleus. The sequence is that of NAC domain-containing protein 2 (NAC002) from Arabidopsis thaliana (Mouse-ear cress).